We begin with the raw amino-acid sequence, 1123 residues long: Probable serine/threonine-protein kinase nek3 (1123 aa).

The 261-residue stretch at 4 to 264 folds into the Protein kinase domain; sequence YEEIKTIGKG…VNDILELPFI (261 aa). ATP is bound by residues 10–18 and Lys-33; that span reads IGKGSFGRA. The Proton acceptor role is filled by Asp-130. 2 stretches are compositionally biased toward low complexity: residues 283 to 307 and 327 to 415; these read NNDS…ISSS and NNNN…TSLK. Disordered stretches follow at residues 283–310, 325–415, 440–802, 866–887, 908–937, and 990–1020; these read NNDS…STEV, NINN…TSLK, SKTP…TNSQ, SAST…TNTM, SVKL…SITD, and SLNN…NQNN. Residues 440–459 show a composition bias toward polar residues; the sequence is SKTPISGTKNPTTSKITPSI. Composition is skewed to low complexity over residues 478–529, 557–576, 588–617, and 642–653; these read SKPT…SSSV, SNLS…SNSQ, SPTS…SLKS, and NGNSNVNSTVLN. Positions 654–665 are enriched in polar residues; it reads RSVSSLSIQHKP. Composition is skewed to low complexity over residues 666 to 696, 712 to 738, and 752 to 802; these read TNSG…TSTT, STPT…TPST, and SSNG…TNSQ. Low complexity predominate over residues 908 to 935; the sequence is SVKLSSKSSSPIKTSSSSSSSSSSSSSI.

The protein belongs to the protein kinase superfamily. NEK Ser/Thr protein kinase family. NIMA subfamily.

It catalyses the reaction L-seryl-[protein] + ATP = O-phospho-L-seryl-[protein] + ADP + H(+). The enzyme catalyses L-threonyl-[protein] + ATP = O-phospho-L-threonyl-[protein] + ADP + H(+). The polypeptide is Probable serine/threonine-protein kinase nek3 (nek3) (Dictyostelium discoideum (Social amoeba)).